Here is a 156-residue protein sequence, read N- to C-terminus: Rhombotin-1 (156 aa).

2 LIM zinc-binding domains span residues 24–83 and 88–147; these read CAGC…RLFG and CAAC…EGQL.

In terms of tissue distribution, expressed mainly in the central nervous. Low level of expression in other tissues including thymus.

It localises to the nucleus. Functionally, may be involved in gene regulation within neural lineage cells potentially by direct DNA binding or by binding to other transcription factors. In Homo sapiens (Human), this protein is Rhombotin-1 (LMO1).